The primary structure comprises 394 residues: Metallophosphoesterase 1 (394 aa).

Residues 27–47 (TVVVISVLLFCEYFIYYLVLF) traverse the membrane as a helical segment. Positions 74, 116, 154, 247, 301, and 303 each coordinate a divalent metal cation. The chain crosses the membrane as a helical span at residues 354–374 (TVLTTYCAAAAFLLVLILAHF).

It belongs to the metallophosphoesterase superfamily. MPPE1 family. In terms of assembly, interacts with GPI-anchor proteins (via the GPI portion). Interacts with TMED10. Requires Mn(2+) as cofactor.

The protein localises to the endoplasmic reticulum-Golgi intermediate compartment membrane. Metallophosphoesterase that catalyzes the removal of a side-chain ethanolamine-phosphate (EtNP) from the second mannose of the GPI-anchor protein intermediate. Participates in the glycan remodeling steps of GPI-anchor maturation to allow an efficient transport of GPI-anchor proteins from the endoplasmic reticulum to the Golgi. This chain is Metallophosphoesterase 1, found in Rattus norvegicus (Rat).